Here is a 136-residue protein sequence, read N- to C-terminus: Large ribosomal subunit protein uL16c (136 aa).

It belongs to the universal ribosomal protein uL16 family. Part of the 50S ribosomal subunit.

Its subcellular location is the plastid. The protein localises to the chloroplast. The polypeptide is Large ribosomal subunit protein uL16c (Saccharum hybrid (Sugarcane)).